The sequence spans 1669 residues: Collagen alpha-3(IV) chain (1669 aa).

Positions 1-28 are cleaved as a signal peptide; it reads MHSKTAPRFLVFLLLTLLLLLAASPVAS. The segment at 29-42 is 7S domain; sequence KGCVCKGKGQCLCA. The segment at 43–1436 is triple-helical region; it reads GTKGEKGEKG…KGNPGDRGTP (1394 aa). 2 disordered regions span residues 44–473 and 500–1439; these read TKGE…EPGS and PGGR…PATG. The segment covering 54 to 68 has biased composition (low complexity); the sequence is PGSPGFPGQKGFPGP. A compositionally biased stretch (pro residues) spans 105–114; sequence PGLPGLPGHP. An N-linked (GlcNAc...) asparagine glycan is attached at N126. Positions 188 to 200 are enriched in pro residues; that stretch reads PGFPGPAGPPGPP. Residues 202–211 show a composition bias toward low complexity; it reads FFGLPGAMGP. N-linked (GlcNAc...) asparagine glycosylation is present at N253. Residues 255 to 269 are compositionally biased toward basic and acidic residues; the sequence is SDFKGEKGDEGERGE. Composition is skewed to low complexity over residues 279–290 and 382–393; these read PGDSYGSEKGAP and SPGLSRPGLRGP. Residues 416–437 are compositionally biased toward pro residues; it reads PPGPLGCPGSPGPPGPPGPPGC. A compositionally biased stretch (low complexity) spans 551–560; it reads NPGDPGLRGL. Pro residues-rich tracts occupy residues 596–617 and 654–665; these read PPGP…PPGY and LGPPGPPGPPGQ. Positions 666–684 are enriched in low complexity; that stretch reads AGPRGLPGLPGPVGKCDPG. Positions 778–787 are enriched in gly residues; sequence GTPGRGGLDG. The short motif at 830-832 is the Cell attachment site element; sequence RGD. The segment covering 861–876 has biased composition (low complexity); sequence CPGEMGPPGQKGYPGA. A compositionally biased stretch (basic and acidic residues) spans 922–939; the sequence is KGEKGRPGAKGERGEKGK. Positions 970-985 are enriched in low complexity; sequence RGNPGLPGPKGLEGLP. The short motif at 994–996 is the Cell attachment site element; it reads RGD. A compositionally biased stretch (low complexity) spans 1092-1103; that stretch reads SGPAGPDGAPGS. Positions 1128 to 1146 are enriched in pro residues; the sequence is PGPPGSTGPPGPPGLPGLP. The short motif at 1152-1154 is the Cell attachment site element; sequence RGD. The segment covering 1228–1248 has biased composition (low complexity); that stretch reads PGAIIPGPKGDRGLPGLRGNP. Residues 1250-1259 show a composition bias toward pro residues; it reads EPGPPGPPGP. The short motif at 1304 to 1306 is the Cell attachment site element; sequence RGD. Over residues 1333 to 1343 the composition is skewed to pro residues; the sequence is PVGPKGPPGPR. Composition is skewed to low complexity over residues 1366 to 1379 and 1402 to 1429; these read QPGM…LGLP and PAGT…LKGN. The epitope recognized by Goodpasture antibodies stretch occupies residues 1425 to 1443; it reads GLKGNPGDRGTPATGTRMR. The Collagen IV NC1 domain maps to 1444–1668; it reads GFIFTRHSQT…SRCQVCMKKR (225 aa). Intrachain disulfides connect C1459–C1550, C1492–C1547, C1504–C1510, C1569–C1664, C1603–C1661, and C1615–C1621. Residues 1478–1556 are required for the anti-angiogenic activity of tumstatin; the sequence is NKRAHGQDLG…CTVCEGPAMA (79 aa). Residue M1532 forms an S-Lysyl-methionine sulfilimine (Met-Lys) (interchain with K-1650) linkage. The tract at residues 1609–1627 is required for the anti-tumor cell activity of tumstatin; it reads ASPFIECHGRGTCNYYSNS. An S-Lysyl-methionine sulfilimine (Lys-Met) (interchain with M-1532) cross-link involves residue K1650.

Belongs to the type IV collagen family. As to quaternary structure, there are six type IV collagen isoforms, alpha 1(IV)-alpha 6(IV), each of which can form a triple helix structure with 2 other chains to generate type IV collagen network. The alpha 3(IV) chain forms a triple helical protomer with alpha 4(IV) and alpha 5(IV); this triple helical structure dimerizes through NC1-NC1 domain interactions such that the alpha 3(IV), alpha 4(IV) and alpha 5(IV) chains of one protomer connect with the alpha 5(IV), alpha 4(IV) and alpha 3(IV) chains of the opposite promoter, respectively. Interacts with ITGB3. Associates with LAMB2 at the neuromuscular junction and in GBM. Post-translationally, prolines at the third position of the tripeptide repeating unit (G-X-Y) are hydroxylated in some or all of the chains. Type IV collagens contain numerous cysteine residues which are involved in inter- and intramolecular disulfide bonding. 12 of these, located in the NC1 domain, are conserved in all known type IV collagens. In terms of processing, the trimeric structure of the NC1 domains is stabilized by covalent bonds between Lys and Met residues. Post-translationally, phosphorylated. Thought to be phosphorylated by CERT, but CERT does not have kinase activity. As to expression, highly expressed in kidney and lung. Detected at lower levels in heart, muscle and skin.

Its subcellular location is the secreted. It is found in the extracellular space. It localises to the extracellular matrix. The protein resides in the basement membrane. Type IV collagen is the major structural component of glomerular basement membranes (GBM), forming a 'chicken-wire' meshwork together with laminins, proteoglycans and entactin/nidogen. Its function is as follows. Tumstatin, a cleavage fragment corresponding to the collagen alpha 3(IV) NC1 domain, possesses both anti-angiogenic and anti-tumor cell activity; these two anti-tumor properties may be regulated via RGD-independent ITGB3-mediated mechanisms. The chain is Collagen alpha-3(IV) chain from Mus musculus (Mouse).